The chain runs to 274 residues: Undecaprenyl-diphosphatase (274 aa).

8 consecutive transmembrane segments (helical) span residues serine 6–serine 26, alanine 45–tryptophan 65, glycine 94–isoleucine 114, leucine 117–alanine 137, tyrosine 155–serine 174, tyrosine 191–leucine 211, glycine 223–isoleucine 243, and isoleucine 253–phenylalanine 273.

This sequence belongs to the UppP family.

It is found in the cell inner membrane. It carries out the reaction di-trans,octa-cis-undecaprenyl diphosphate + H2O = di-trans,octa-cis-undecaprenyl phosphate + phosphate + H(+). Its function is as follows. Catalyzes the dephosphorylation of undecaprenyl diphosphate (UPP). Confers resistance to bacitracin. This is Undecaprenyl-diphosphatase from Serratia proteamaculans (strain 568).